Here is a 504-residue protein sequence, read N- to C-terminus: WD repeat-containing protein 55 homolog (504 aa).

Over residues 32–49 the composition is skewed to acidic residues; the sequence is QEVVNESDSEIGEYDLGD. Residues 32–135 are disordered; it reads QEVVNESDSE…NAFDMDEDDE (104 aa). The segment covering 66-76 has biased composition (polar residues); that stretch reads DSISSDGSFNP. Over residues 77–95 the composition is skewed to acidic residues; that stretch reads NDEDSDTDSDDSMLDEPDE. Over residues 114–124 the composition is skewed to polar residues; sequence SGSSNRNQDSD. WD repeat units lie at residues 158 to 197, 202 to 241, 245 to 283, 286 to 325, 328 to 367, and 412 to 451; these read KLEDFITDICFHPERHIIALATIIGDVHLYEYSNEENKLL, VHAKACRDVEFTEDGRSLITCSKDKSVMITDMETEKLKKL, AHDDAINKLLVLDERLFASGDDSGTVKLWDFRTKDSIFE, EIEDQVTQMITNDQKKLLLATSADGYLTTFNIGARKLYVQ, PYEEELNCMGIYRGNSKLVVGTSKGRLYSYNWGYFGYHCD, and QHNMPIESMDINTNGELLASSSHNNDVRFWNVKYFEDFGD. Residues 484–504 are disordered; it reads AKEDNNDNENDDATAGPSNTT.

Belongs to the WD repeat WDR55 family.

This is WD repeat-containing protein 55 homolog from Drosophila willistoni (Fruit fly).